We begin with the raw amino-acid sequence, 289 residues long: Formamidopyrimidine-DNA glycosylase 1 (289 aa).

Residue P2 is the Schiff-base intermediate with DNA of the active site. E3 (proton donor) is an active-site residue. K61 (proton donor; for beta-elimination activity) is an active-site residue. H100, R119, and K165 together coordinate DNA. The segment at 251-285 (DAYGREGENCRRCGAVIRRERFMNRSSFYCPRCQP) adopts an FPG-type zinc-finger fold. R275 (proton donor; for delta-elimination activity) is an active-site residue.

The protein belongs to the FPG family. In terms of assembly, monomer. Requires Zn(2+) as cofactor.

It catalyses the reaction Hydrolysis of DNA containing ring-opened 7-methylguanine residues, releasing 2,6-diamino-4-hydroxy-5-(N-methyl)formamidopyrimidine.. The catalysed reaction is 2'-deoxyribonucleotide-(2'-deoxyribose 5'-phosphate)-2'-deoxyribonucleotide-DNA = a 3'-end 2'-deoxyribonucleotide-(2,3-dehydro-2,3-deoxyribose 5'-phosphate)-DNA + a 5'-end 5'-phospho-2'-deoxyribonucleoside-DNA + H(+). Functionally, involved in base excision repair of DNA damaged by oxidation or by mutagenic agents. Acts as a DNA glycosylase that recognizes and removes damaged bases. Has a preference for oxidized purines, such as 7,8-dihydro-8-oxoguanine (8-oxoG) when paired with C, G or T, as well as methyl-faPy (formanidopyrimidine residues) in poly(dG-dC) and spiroiminodihydantoin:C base pairs. Unlike its E.coli ortholog has no activity on 8-oxoG:A. Has AP (apurinic/apyrimidinic) lyase activity and introduces nicks in the DNA strand. Cleaves the DNA backbone by beta-delta elimination to generate a single-strand break at the site of the removed base with both 3'- and 5'-phosphates. Cleaves ssDNA containing an AP site. Complements the H(2)O(2) sensitivity of an M.smegmatis fpg disruption mutant; upon expression in M.smegmatis excises 8-oxoG from dsDNA. The protein is Formamidopyrimidine-DNA glycosylase 1 (fpg1) of Mycobacterium tuberculosis (strain ATCC 25618 / H37Rv).